The chain runs to 1157 residues: MNRNNQNEYEIIDAPHCGCPSDDDVRYPLASDPNAALQNMNYKDYLQMTDEDYTDSYINPSLSISGRDAVQTALTVVGRILGALGVPFSGQIVSFYQFLLNTLWPVNDTAIWEAFMRQVEELVNQQITEFARNQALARLQGLGDSFNVYQRSLQNWLADRNDTRNLSVVRAQFIALDLDFVNAIPLFAVNGQQVPLLSVYAQAVNLHLLLLKDASLFGEGWGFTQGEISTYYDRQLELTAKYTNYCETWYNTGLDRLRGTNTESWLRYHQFRREMTLVVLDVVALFPYYDVRLYPTGSNPQLTREVYTDPIVFNPPANVGLCRRWGTNPYNTFSELENAFIRPPHLFDRLNSLTISSNRFPVSSNFMDYWSGHTLRRSYLNDSAVQEDSYGLITTTRATINPGVDGTNRIESTAVDFRSALIGIYGVNRASFVPGGLFNGTTSPANGGCRDLYDTNDELPPDESTGSSTHRLSHVTFFSFQTNQAGSIANAGSVPTYVWTRRDVDLNNTITPNRITQLPLVKASAPVSGTTVLKGPGFTGGGILRRTTNGTFGTLRVTVNSPLTQQYRLRVRFASTGNFSIRVLRGGVSIGDVRLGSTMNRGQELTYESFFTREFTTTGPFNPPFTFTQAQEILTVNAEGVSTGGEYYIDRIEIVPVNPAREAEEDLEAAKKAVASLFTRTRDGLQVNVTDYQVDQAANLVSCLSDEQYGHDKKMLLEAVRAAKRLSRERNLLQDPDFNTINSTEENGWKASNGVTISEGGPFFKGRALQLASARENYPTYIYQKVDASVLKPYTRYRLDGFVKSSQDLEIDLIHHHKVHLVKNVPDNLVSDTYSDGSCSGINRCDEQHQVDMQLDAEHHPMDCCEAAQTHEFSSYINTGDLNASVDQGIWVVLKVRTTDGYATLGNLELVEVGPLSGESLEREQRDNAKWNAELGRKRAEIDRVYLAAKQAINHLFVDYQDQQLNPEIGLAEINEASNLVESISGVYSDTLLQIPGINYEIYTELSDRLQQASYLYTSRNAVQNGDFNSGLDSWNTTMDASVQQDGNMHFLVLSHWDAQVSQQLRVNPNCKYVLRVTARKVGGGDGYVTIRDGAHHQETLTFNACDYDVNGTYVNDNSYITEEVVFYPETKHMWVEVSESEGSFYIDSIEFIETQE.

It belongs to the delta endotoxin family.

Functionally, promotes colloidosmotic lysis by binding to the midgut epithelial cells of Lepidoptera larvae. Has a fairly broad spectrum of activity against members of the Pyralidae, Plutellidae, Sphingidae and Noctuidae families. It was the first insecticidal crystal protein characterized with activity against cutworms. No activity is observed against some beetles, such as the Colorado potato beetle. This is Pesticidal crystal protein Cry9Ca (cry9Ca) from Bacillus thuringiensis subsp. tolworthi.